The following is a 1188-amino-acid chain: Oxysterol-binding protein homolog 1 (1188 aa).

ANK repeat units lie at residues 51–80 (VLHLMLHYAVQVAPMAVIKEIVHHWVSTTN), 96–125 (NGNTPLHIAAYQSRGDIVAFLLDQPTINDC), and 196–225 (TGDTVLHEFVKKRDVIMCRWLLEHGADPFK). One can recognise a PH domain in the interval 330-379 (MSSCSLHLDSSEKLKFEIIGGNNGVIRWHLKGNHPIETNRWVWAIQGAIR). The residue at position 394 (serine 394) is a Phosphoserine. Disordered regions lie at residues 415–546 (ATSK…GDED) and 661–692 (QKKLNNQPQVETEANEESDDANSMIKGSQEST). A compositionally biased stretch (polar residues) spans 424–433 (PHLSKSTLTQ). The span at 443–462 (TNNNNNKSNNDYDDNNNNNN) shows a compositional bias: low complexity. Residues 463-473 (NDDDDYDDDDE) are compositionally biased toward acidic residues. A phosphoserine mark is found at serine 490 and serine 500. Positions 514 to 529 (PSDDEGYSEDDSDDDG) are enriched in acidic residues. 3 positions are modified to phosphoserine: serine 678, serine 683, and serine 691. Residues threonine 692 and threonine 694 each carry the phosphothreonine modification. Phosphoserine occurs at positions 708 and 712. The short motif at 716-722 (EFFDAEE) is the FFAT element. Positions 721–755 (EEAASDKKANDSEDLTTNKETPANAKPQEEAPEDE) are disordered. Positions 800–1174 (LWSVLKSMVG…YWKFNGEYWN (375 aa)) are OSBP-related domain (ORD). Residues aspartate 834 and lysine 962 each contribute to the ergosterol site.

It belongs to the OSBP family. As to quaternary structure, interacts with NVJ1. Interacts with the AAA ATPase AFG2; regulates OSH1 membrane association. AFG2 is required for membrane dissociation of OSH1. Interacts with SCS2.

Its subcellular location is the golgi apparatus membrane. It localises to the nucleus outer membrane. The protein resides in the endoplasmic reticulum membrane. The protein localises to the vacuole membrane. Functionally, lipid transport protein (LTP) involved in non-vesicular transfer of lipids between membranes. Functions in phosphoinositide-coupled directional transport of various lipids by carrying the lipid molecule in a hydrophobic pocket and transferring it between membranes through the cytosol. Involved in maintenance of intracellular sterol distribution and homeostasis. Involved in non-vesicular transport of ergosterol and PI(4)P at the NVJ. Binds sterol and PI4P in a mutually exclusive manner. May be involved in formation of PMN vesicles by altering the membrane lipid composition. In Saccharomyces cerevisiae (strain ATCC 204508 / S288c) (Baker's yeast), this protein is Oxysterol-binding protein homolog 1.